Consider the following 430-residue polypeptide: Aspartate aminotransferase, mitochondrial (430 aa).

The transit peptide at 1-29 directs the protein to the mitochondrion; that stretch reads MALLHSGRVLSGMAAAFHPGLAAAASARA. Thr-48 is subject to Phosphothreonine. At Lys-59 the chain carries N6-acetyllysine. Residue Gly-65 coordinates substrate. At Lys-73 the chain carries N6-acetyllysine; alternate. Lys-73 is modified (N6-succinyllysine; alternate). Lys-82 is modified (N6-acetyllysine). At Lys-90 the chain carries N6-acetyllysine; alternate. An N6-succinyllysine; alternate modification is found at Lys-90. Tyr-96 is modified (3'-nitrotyrosine; alternate). Phosphotyrosine; alternate is present on Tyr-96. Residues Lys-107 and Lys-122 each carry the N6-acetyllysine; alternate modification. Lys-107 and Lys-122 each carry N6-succinyllysine; alternate. Ser-143 is subject to Phosphoserine. Lys-159 is modified (N6-acetyllysine; alternate). An N6-succinyllysine; alternate modification is found at Lys-159. Trp-162 contributes to the substrate binding site. Lys-185 carries the post-translational modification N6-acetyllysine; alternate. Lys-185 is subject to N6-succinyllysine; alternate. Asn-215 serves as a coordination point for substrate. The residue at position 227 (Lys-227) is an N6-succinyllysine. Lys-234 carries the post-translational modification N6-acetyllysine. Residues Lys-279 and Lys-296 each carry the N6-acetyllysine; alternate modification. Residue Lys-279 is modified to N6-(pyridoxal phosphate)lysine; alternate. An N6-succinyllysine; alternate modification is found at Lys-296. At Lys-302 the chain carries N6-acetyllysine. Lys-309 carries the post-translational modification N6-acetyllysine; alternate. N6-succinyllysine; alternate is present on Lys-309. Arg-313 bears the Asymmetric dimethylarginine mark. Lys-338 is modified (N6-acetyllysine; alternate). N6-succinyllysine; alternate is present on Lys-338. Lys-345 carries the N6-acetyllysine modification. Lys-363 bears the N6-acetyllysine; alternate mark. At Lys-363 the chain carries N6-succinyllysine; alternate. N6-acetyllysine is present on residues Lys-364 and Lys-387. Residues Lys-396 and Lys-404 each carry the N6-acetyllysine; alternate modification. Residues Lys-396 and Lys-404 each carry the N6-succinyllysine; alternate modification. Residue Arg-407 participates in substrate binding.

The protein belongs to the class-I pyridoxal-phosphate-dependent aminotransferase family. As to quaternary structure, homodimer. Pyridoxal 5'-phosphate is required as a cofactor. In terms of tissue distribution, expressed in all tissues tested: liver, pancreas, kidney, heart, spleen, arterioles, and lymphocytes.

The protein localises to the mitochondrion matrix. The protein resides in the cell membrane. The catalysed reaction is L-aspartate + 2-oxoglutarate = oxaloacetate + L-glutamate. The enzyme catalyses L-kynurenine + 2-oxoglutarate = kynurenate + L-glutamate + H2O. Catalyzes the irreversible transamination of the L-tryptophan metabolite L-kynurenine to form kynurenic acid (KA). As a member of the malate-aspartate shuttle, it has a key role in the intracellular NAD(H) redox balance. Is important for metabolite exchange between mitochondria and cytosol, and for amino acid metabolism. Facilitates cellular uptake of long-chain free fatty acids. This Rattus norvegicus (Rat) protein is Aspartate aminotransferase, mitochondrial (Got2).